Reading from the N-terminus, the 958-residue chain is Coiled-coil domain-containing protein 187 (958 aa).

The span at 116–132 shows a compositional bias: low complexity; that stretch reads SSVSSGRMSGSSGGHES. Disordered regions lie at residues 116–160, 345–447, 470–492, and 510–602; these read SSVS…SDPR, ELTR…PRFF, QDIS…QRPW, and EPSP…KAQA. Composition is skewed to polar residues over residues 374-398 and 470-491; these read LQST…NSSL and QDIS…SQRP. Over residues 536 to 545 the composition is skewed to low complexity; the sequence is SSPSSKGKSA. The stretch at 718 to 743 forms a coiled coil; sequence KQARLQALETMAEALRQRVDILTTKL. The disordered stretch occupies residues 916–958; the sequence is EVKKEGLVTPWTTRSCGKGEPADRPWAGWSGGQGGLPWASSTA.

The chain is Coiled-coil domain-containing protein 187 from Mus musculus (Mouse).